The sequence spans 190 residues: Potassium-transporting ATPase KdpC subunit (190 aa).

A helical transmembrane segment spans residues 13-33 (IGFLLLTLVCGVLYPGVVTVF).

It belongs to the KdpC family. As to quaternary structure, the system is composed of three essential subunits: KdpA, KdpB and KdpC.

Its subcellular location is the cell membrane. In terms of biological role, part of the high-affinity ATP-driven potassium transport (or Kdp) system, which catalyzes the hydrolysis of ATP coupled with the electrogenic transport of potassium into the cytoplasm. This subunit acts as a catalytic chaperone that increases the ATP-binding affinity of the ATP-hydrolyzing subunit KdpB by the formation of a transient KdpB/KdpC/ATP ternary complex. This is Potassium-transporting ATPase KdpC subunit from Listeria monocytogenes serovar 1/2a (strain ATCC BAA-679 / EGD-e).